We begin with the raw amino-acid sequence, 132 residues long: Z-ring associated protein G (132 aa).

The helical transmembrane segment at 1-21 threads the bilayer; it reads MTWEYALIGLVVGIIIGAVAM. The disordered stretch occupies residues 95–132; sequence FRNRLAESEASNDQAPVQMPRDYSEGASGLLRTGAKRD.

The protein belongs to the ZapG family.

It localises to the cell inner membrane. Functionally, involved in cell division, cell envelope biogenesis and cell shape maintenance. The protein is Z-ring associated protein G of Escherichia coli O157:H7.